The chain runs to 80 residues: Secreted transmembrane peptide 3 (80 aa).

Positions 1 to 27 (MGLKMSSNALLLSLFLLLLCLFSEIGG) are cleaved as a signal peptide. The segment at 44-80 (IATPPSLTCGGQRLGGPQPRLSPCPRPRPRPRPRTGS) is disordered. The SCOOP motif motif lies at 62–80 (PRLSPCPRPRPRPRPRTGS). The span at 70-80 (PRPRPRPRTGS) shows a compositional bias: basic residues.

It belongs to the serine rich endogenous peptide (SCOOP) phytocytokine family. Interacts with MIK2 (via extracellular leucine-rich repeat domain); this interaction triggers the formation of complex between MIK2 and the BAK1/SERK3 and SERK4 coreceptors, and subsequent BAK1 activation by phosphorylation. As to expression, mostly expressed in leaves, and, to a lower extent, in roots, stems, siliques, seeds and flowers.

The protein resides in the cell membrane. It localises to the secreted. The protein localises to the extracellular space. Its subcellular location is the apoplast. It is found in the endoplasmic reticulum. The protein resides in the golgi apparatus. In terms of biological role, brassicaceae-specific phytocytokine (plant endogenous peptide released into the apoplast) perceived by MIK2 in a BAK1/SERK3 and SERK4 coreceptors-dependent manner, that modulates various physiological and antimicrobial processes including growth prevention and reactive oxygen species (ROS) response regulation. The protein is Secreted transmembrane peptide 3 of Arabidopsis thaliana (Mouse-ear cress).